We begin with the raw amino-acid sequence, 205 residues long: Thymidylate kinase (205 aa).

9 to 16 (GPEGSGKT) provides a ligand contact to ATP.

This sequence belongs to the thymidylate kinase family.

It carries out the reaction dTMP + ATP = dTDP + ADP. In terms of biological role, phosphorylation of dTMP to form dTDP in both de novo and salvage pathways of dTTP synthesis. The polypeptide is Thymidylate kinase (Staphylococcus aureus (strain MSSA476)).